The sequence spans 127 residues: Small ribosomal subunit protein uS11 (127 aa).

Belongs to the universal ribosomal protein uS11 family. In terms of assembly, part of the 30S ribosomal subunit. Interacts with proteins S7 and S18. Binds to IF-3.

Functionally, located on the platform of the 30S subunit, it bridges several disparate RNA helices of the 16S rRNA. Forms part of the Shine-Dalgarno cleft in the 70S ribosome. The polypeptide is Small ribosomal subunit protein uS11 (Rickettsia felis (strain ATCC VR-1525 / URRWXCal2) (Rickettsia azadi)).